Consider the following 449-residue polypeptide: MNPNQKIITIGSICMVTGIVSLMLQIGNMISIWVSHSIHTGNQHQSEPISNTNFLTEKAVASVKLAGNSSLCPINGWAVYSKDNSIRIGSKGDVFVIREPFISCSHLECRTFFLTQGALLNDKHSNGTVKDRSPHRTLMSCPVGEAPSPYNSRFESVAWSASACHDGTSWLTIGISGPDNGAVAVLKYNGIITDTIKSWRNNILRTQESECACVNGSCFTVMTDGPSNGQASHKIFKMEKGKVVKSVELDAPNYHYEECSCYPNAGEITCVCRDNWHGSNRPWVSFNQNLEYQIGYICSGVFGDNPRPNDGTGSCGPVSSNGAYGVKGFSFKYGNGVWIGRTKSTNSRSGFEMIWDPNGWTETDSSFSVKQDIVAITDWSGYSGSFVQHPELTGLDCIRPCFWVELIRGRPKESTIWTSGSSISFCGVNSDTVGWSWPDGAELPFTIDK.

The Intravirion segment spans residues 1 to 6 (MNPNQK). The helical transmembrane segment at 7–34 (IITIGSICMVTGIVSLMLQIGNMISIWV) threads the bilayer. An involved in apical transport and lipid raft association region spans residues 11 to 33 (GSICMVTGIVSLMLQIGNMISIW). Over 35–449 (SHSIHTGNQH…GAELPFTIDK (415 aa)) the chain is Virion surface. Residues 36–70 (HSIHTGNQHQSEPISNTNFLTEKAVASVKLAGNSS) form a hypervariable stalk region region. The interval 71–449 (LCPINGWAVY…GAELPFTIDK (379 aa)) is head of neuraminidase. 8 cysteine pairs are disulfide-bonded: cysteine 72-cysteine 397, cysteine 104-cysteine 109, cysteine 164-cysteine 211, cysteine 213-cysteine 218, cysteine 259-cysteine 272, cysteine 261-cysteine 270, cysteine 298-cysteine 315, and cysteine 401-cysteine 426. Arginine 98 contacts substrate. Aspartate 131 (proton donor/acceptor) is an active-site residue. Residue arginine 132 coordinates substrate. Substrate is bound at residue 257-258 (EE). Arginine 273 provides a ligand contact to substrate. Residues aspartate 274, glycine 278, aspartate 304, glycine 322, and tyrosine 324 each coordinate Ca(2+). Residue arginine 348 coordinates substrate. Tyrosine 382 (nucleophile) is an active-site residue.

It belongs to the glycosyl hydrolase 34 family. As to quaternary structure, homotetramer. Ca(2+) is required as a cofactor. N-glycosylated.

It is found in the virion membrane. It localises to the host apical cell membrane. It catalyses the reaction Hydrolysis of alpha-(2-&gt;3)-, alpha-(2-&gt;6)-, alpha-(2-&gt;8)- glycosidic linkages of terminal sialic acid residues in oligosaccharides, glycoproteins, glycolipids, colominic acid and synthetic substrates.. With respect to regulation, inhibited by the neuraminidase inhibitors zanamivir (Relenza) and oseltamivir (Tamiflu). These drugs interfere with the release of progeny virus from infected cells and are effective against all influenza strains. Resistance to neuraminidase inhibitors is quite rare. Catalyzes the removal of terminal sialic acid residues from viral and cellular glycoconjugates. Cleaves off the terminal sialic acids on the glycosylated HA during virus budding to facilitate virus release. Additionally helps virus spread through the circulation by further removing sialic acids from the cell surface. These cleavages prevent self-aggregation and ensure the efficient spread of the progeny virus from cell to cell. Otherwise, infection would be limited to one round of replication. Described as a receptor-destroying enzyme because it cleaves a terminal sialic acid from the cellular receptors. May facilitate viral invasion of the upper airways by cleaving the sialic acid moities on the mucin of the airway epithelial cells. Likely to plays a role in the budding process through its association with lipid rafts during intracellular transport. May additionally display a raft-association independent effect on budding. Plays a role in the determination of host range restriction on replication and virulence. Sialidase activity in late endosome/lysosome traffic seems to enhance virus replication. This Influenza A virus (strain A/Vietnam/1203/2004 H5N1) protein is Neuraminidase.